The chain runs to 152 residues: Transcriptional repressor NrdR (152 aa).

Residues 3–34 (CPKCTSIEDKVIDSRISKEGSTIRRRRECLEC) fold into a zinc finger. One can recognise an ATP-cone domain in the interval 49 to 139 (IVVIKRDGRR…VYKEFRDVSE (91 aa)).

It belongs to the NrdR family. Zn(2+) is required as a cofactor.

Negatively regulates transcription of bacterial ribonucleotide reductase nrd genes and operons by binding to NrdR-boxes. In Opitutus terrae (strain DSM 11246 / JCM 15787 / PB90-1), this protein is Transcriptional repressor NrdR.